Reading from the N-terminus, the 358-residue chain is MANGSGLSVTELAGSVGFILAVLVEVGAVLGNGTLLVVVLRTPDLQDAFYLAHLCVVDLLAAASIMPLGLLAAPPGLGTVPLDPSSCRAARFLSAALLPACTLGVAALGLARYRLIVHPLRPGARPAPALVLTAVWSAAALLGALSLLGPPPAPPPAPARCSVLAGGLGPFRPLWAMLAFALPALLLLAAYGSIFLVARRAALRPPRGTRPRSDSLDSRLSFLPPLRPRLLGGKAALAPALAVGQFAACWLPYGCACLAPAARAAAAEATVTWVAYSAFAAHPFLYGLLQRPVRLALGRLTRRALPRAPKACTSQAWHLQTLLRRLQELRKDPVLGPSEAPEQARELARQTPSVSEAT.

Over 1 to 17 the chain is Extracellular; the sequence is MANGSGLSVTELAGSVG. Asn-3 carries N-linked (GlcNAc...) asparagine glycosylation. The helical transmembrane segment at 18-38 threads the bilayer; the sequence is FILAVLVEVGAVLGNGTLLVV. The Cytoplasmic segment spans residues 39 to 53; that stretch reads VLRTPDLQDAFYLAH. Residues 54 to 74 traverse the membrane as a helical segment; sequence LCVVDLLAAASIMPLGLLAAP. At 75-89 the chain is on the extracellular side; sequence PGLGTVPLDPSSCRA. Residues 90–110 traverse the membrane as a helical segment; that stretch reads ARFLSAALLPACTLGVAALGL. Topologically, residues 111–128 are cytoplasmic; the sequence is ARYRLIVHPLRPGARPAP. A helical transmembrane segment spans residues 129–149; it reads ALVLTAVWSAAALLGALSLLG. The Extracellular portion of the chain corresponds to 150 to 176; sequence PPPAPPPAPARCSVLAGGLGPFRPLWA. A helical membrane pass occupies residues 177-197; it reads MLAFALPALLLLAAYGSIFLV. The Cytoplasmic portion of the chain corresponds to 198–234; that stretch reads ARRAALRPPRGTRPRSDSLDSRLSFLPPLRPRLLGGK. A helical membrane pass occupies residues 235–255; sequence AALAPALAVGQFAACWLPYGC. Residues 256-268 are Extracellular-facing; sequence ACLAPAARAAAAE. Residues 269–289 traverse the membrane as a helical segment; it reads ATVTWVAYSAFAAHPFLYGLL. Topologically, residues 290-358 are cytoplasmic; the sequence is QRPVRLALGR…RQTPSVSEAT (69 aa). A disordered region spans residues 334–358; sequence VLGPSEAPEQARELARQTPSVSEAT.

This sequence belongs to the G-protein coupled receptor 1 family. Homodimer. Forms heterodimer with MTNR1B. Interacts with ARRB1 and ARRB2 in a spontaneous and agonist-independent manner; leading to the internalization of GPR62 in the endosomal compartment. In terms of tissue distribution, expressed in the brain and testes. Expressed widely, in the brain, including the cerebral cortex, cerebellum, hippocampus,thalamus and pituitary gland. In the testes, expressed specifically in the germ cells.

It localises to the cell membrane. The protein resides in the endosome membrane. Orphan G-protein coupled receptor. Constitutively activates the G(q/11)/inositol phosphate and the G(s)-alpha/cAMP signaling pathways. Has spontaneous activity for beta-arrestin recruitment. Shows a reciprocal regulatory interaction with the melatonin receptor MTNR1B most likely through receptor heteromerization. The protein is G-protein coupled receptor 62 (Gpr62) of Mus musculus (Mouse).